The sequence spans 339 residues: D-erythrose-4-phosphate dehydrogenase (339 aa).

11–12 contacts NAD(+); it reads RI. Substrate is bound by residues 153–155, Arg199, 212–213, and Arg235; these read SCT and TK. Residue Cys154 is the Nucleophile of the active site. Asn317 serves as a coordination point for NAD(+).

It belongs to the glyceraldehyde-3-phosphate dehydrogenase family. Epd subfamily. Homotetramer.

It is found in the cytoplasm. It carries out the reaction D-erythrose 4-phosphate + NAD(+) + H2O = 4-phospho-D-erythronate + NADH + 2 H(+). It participates in cofactor biosynthesis; pyridoxine 5'-phosphate biosynthesis; pyridoxine 5'-phosphate from D-erythrose 4-phosphate: step 1/5. Functionally, catalyzes the NAD-dependent conversion of D-erythrose 4-phosphate to 4-phosphoerythronate. The sequence is that of D-erythrose-4-phosphate dehydrogenase from Shewanella halifaxensis (strain HAW-EB4).